Consider the following 796-residue polypeptide: Endonuclease MutS2 (796 aa).

339–346 (GPNTGGKT) lines the ATP pocket. A disordered region spans residues 620 to 644 (EKLGDTDSSLVSKAKKNRKQHKPSD). Residues 721–796 (LNIIGKRVDE…DHGVTIVEFK (76 aa)) form the Smr domain.

It belongs to the DNA mismatch repair MutS family. MutS2 subfamily. As to quaternary structure, homodimer. Binds to stalled ribosomes, contacting rRNA.

Its function is as follows. Endonuclease that is involved in the suppression of homologous recombination and thus may have a key role in the control of bacterial genetic diversity. Functionally, acts as a ribosome collision sensor, splitting the ribosome into its 2 subunits. Detects stalled/collided 70S ribosomes which it binds and splits by an ATP-hydrolysis driven conformational change. Acts upstream of the ribosome quality control system (RQC), a ribosome-associated complex that mediates the extraction of incompletely synthesized nascent chains from stalled ribosomes and their subsequent degradation. Probably generates substrates for RQC. The protein is Endonuclease MutS2 of Lachnoclostridium phytofermentans (strain ATCC 700394 / DSM 18823 / ISDg) (Clostridium phytofermentans).